We begin with the raw amino-acid sequence, 554 residues long: Glucose-6-phosphate isomerase (554 aa).

Residue E359 is the Proton donor of the active site. Catalysis depends on residues H390 and K518.

It belongs to the GPI family.

The protein resides in the cytoplasm. The catalysed reaction is alpha-D-glucose 6-phosphate = beta-D-fructose 6-phosphate. Its pathway is carbohydrate biosynthesis; gluconeogenesis. It functions in the pathway carbohydrate degradation; glycolysis; D-glyceraldehyde 3-phosphate and glycerone phosphate from D-glucose: step 2/4. In terms of biological role, catalyzes the reversible isomerization of glucose-6-phosphate to fructose-6-phosphate. In Pseudomonas fluorescens (strain SBW25), this protein is Glucose-6-phosphate isomerase.